We begin with the raw amino-acid sequence, 127 residues long: Aspartate 1-decarboxylase (127 aa).

Ser-25 serves as the catalytic Schiff-base intermediate with substrate; via pyruvic acid. Ser-25 bears the Pyruvic acid (Ser) mark. Thr-57 is a binding site for substrate. Tyr-58 acts as the Proton donor in catalysis. 73–75 (GAA) contributes to the substrate binding site.

Belongs to the PanD family. As to quaternary structure, heterooctamer of four alpha and four beta subunits. It depends on pyruvate as a cofactor. Is synthesized initially as an inactive proenzyme, which is activated by self-cleavage at a specific serine bond to produce a beta-subunit with a hydroxyl group at its C-terminus and an alpha-subunit with a pyruvoyl group at its N-terminus.

Its subcellular location is the cytoplasm. The enzyme catalyses L-aspartate + H(+) = beta-alanine + CO2. It functions in the pathway cofactor biosynthesis; (R)-pantothenate biosynthesis; beta-alanine from L-aspartate: step 1/1. In terms of biological role, catalyzes the pyruvoyl-dependent decarboxylation of aspartate to produce beta-alanine. In Neisseria meningitidis serogroup C / serotype 2a (strain ATCC 700532 / DSM 15464 / FAM18), this protein is Aspartate 1-decarboxylase.